Here is a 172-residue protein sequence, read N- to C-terminus: Adenine phosphoribosyltransferase (172 aa).

The protein belongs to the purine/pyrimidine phosphoribosyltransferase family. As to quaternary structure, homodimer.

It is found in the cytoplasm. The catalysed reaction is AMP + diphosphate = 5-phospho-alpha-D-ribose 1-diphosphate + adenine. It functions in the pathway purine metabolism; AMP biosynthesis via salvage pathway; AMP from adenine: step 1/1. In terms of biological role, catalyzes a salvage reaction resulting in the formation of AMP, that is energically less costly than de novo synthesis. In Clostridium acetobutylicum (strain ATCC 824 / DSM 792 / JCM 1419 / IAM 19013 / LMG 5710 / NBRC 13948 / NRRL B-527 / VKM B-1787 / 2291 / W), this protein is Adenine phosphoribosyltransferase.